The sequence spans 227 residues: Urease accessory protein UreF 2 (227 aa).

The protein belongs to the UreF family. As to quaternary structure, ureD, UreF and UreG form a complex that acts as a GTP-hydrolysis-dependent molecular chaperone, activating the urease apoprotein by helping to assemble the nickel containing metallocenter of UreC. The UreE protein probably delivers the nickel.

The protein localises to the cytoplasm. Its function is as follows. Required for maturation of urease via the functional incorporation of the urease nickel metallocenter. This Brucella anthropi (strain ATCC 49188 / DSM 6882 / CCUG 24695 / JCM 21032 / LMG 3331 / NBRC 15819 / NCTC 12168 / Alc 37) (Ochrobactrum anthropi) protein is Urease accessory protein UreF 2.